Here is a 203-residue protein sequence, read N- to C-terminus: Holliday junction branch migration complex subunit RuvA (203 aa).

Residues 1 to 63 (MIGKLSGRVD…EDHINLYGFL (63 aa)) are domain I. The tract at residues 64–142 (SLEEKSFFNL…KISSSSAAIK (79 aa)) is domain II. The segment at 143–149 (DSLNIKG) is flexible linker. The segment at 150 to 203 (ITPVASSEVIKALINMGFSRFEAQNAVQEIITKNPEISIDELIRTALKNRNSNF) is domain III.

It belongs to the RuvA family. Homotetramer. Forms an RuvA(8)-RuvB(12)-Holliday junction (HJ) complex. HJ DNA is sandwiched between 2 RuvA tetramers; dsDNA enters through RuvA and exits via RuvB. An RuvB hexamer assembles on each DNA strand where it exits the tetramer. Each RuvB hexamer is contacted by two RuvA subunits (via domain III) on 2 adjacent RuvB subunits; this complex drives branch migration. In the full resolvosome a probable DNA-RuvA(4)-RuvB(12)-RuvC(2) complex forms which resolves the HJ.

It is found in the cytoplasm. The RuvA-RuvB-RuvC complex processes Holliday junction (HJ) DNA during genetic recombination and DNA repair, while the RuvA-RuvB complex plays an important role in the rescue of blocked DNA replication forks via replication fork reversal (RFR). RuvA specifically binds to HJ cruciform DNA, conferring on it an open structure. The RuvB hexamer acts as an ATP-dependent pump, pulling dsDNA into and through the RuvAB complex. HJ branch migration allows RuvC to scan DNA until it finds its consensus sequence, where it cleaves and resolves the cruciform DNA. The polypeptide is Holliday junction branch migration complex subunit RuvA (Rickettsia bellii (strain OSU 85-389)).